Reading from the N-terminus, the 396-residue chain is Ornithine aminotransferase 2 (396 aa).

Position 255 is an N6-(pyridoxal phosphate)lysine (Lys-255).

This sequence belongs to the class-III pyridoxal-phosphate-dependent aminotransferase family. OAT subfamily. The cofactor is pyridoxal 5'-phosphate.

The protein resides in the cytoplasm. The enzyme catalyses a 2-oxocarboxylate + L-ornithine = L-glutamate 5-semialdehyde + an L-alpha-amino acid. It participates in amino-acid biosynthesis; L-proline biosynthesis; L-glutamate 5-semialdehyde from L-ornithine: step 1/1. Catalyzes the interconversion of ornithine to glutamate semialdehyde. This is Ornithine aminotransferase 2 from Staphylococcus saprophyticus subsp. saprophyticus (strain ATCC 15305 / DSM 20229 / NCIMB 8711 / NCTC 7292 / S-41).